A 157-amino-acid chain; its full sequence is Arginine regulator (157 aa).

The protein belongs to the ArgR family.

The protein localises to the cytoplasm. The protein operates within amino-acid degradation; L-arginine degradation via ADI pathway. Its function is as follows. Regulates the transcription of the arc operon, involved in arginine catabolism. The sequence is that of Arginine regulator (argR1) from Streptococcus pyogenes serotype M3 (strain SSI-1).